The following is an 864-amino-acid chain: Leucine--tRNA ligase (864 aa).

The short motif at 42-52 (PYPSGKLHMGH) is the 'HIGH' region element. Positions 624-628 (KMSKS) match the 'KMSKS' region motif. Lys627 is an ATP binding site.

It belongs to the class-I aminoacyl-tRNA synthetase family.

The protein localises to the cytoplasm. It carries out the reaction tRNA(Leu) + L-leucine + ATP = L-leucyl-tRNA(Leu) + AMP + diphosphate. The chain is Leucine--tRNA ligase from Burkholderia pseudomallei (strain 668).